We begin with the raw amino-acid sequence, 287 residues long: Undecaprenyl-diphosphatase (287 aa).

8 helical membrane-spanning segments follow: residues 1–21 (MALWIAVLLGVVQGIFMFLPV), 49–69 (MILFNLVVHVGTLVSIVVVFA), 101–121 (LFLLGMLSVLFTGVVGLTLKA), 126–146 (VFANPWMIAFTLILTGALLFW), 160–180 (TGVGTATLIGVAQGFALMPGL), 203–223 (YSFFLAIPTICAATLLQAIEV), 232–252 (VSVAALITGFVVAAGVGIVSL), and 267–287 (FSFYVWALAAAILLGWIDLPI).

Belongs to the UppP family.

Its subcellular location is the cell inner membrane. The enzyme catalyses di-trans,octa-cis-undecaprenyl diphosphate + H2O = di-trans,octa-cis-undecaprenyl phosphate + phosphate + H(+). Its function is as follows. Catalyzes the dephosphorylation of undecaprenyl diphosphate (UPP). Confers resistance to bacitracin. The chain is Undecaprenyl-diphosphatase from Halorhodospira halophila (strain DSM 244 / SL1) (Ectothiorhodospira halophila (strain DSM 244 / SL1)).